A 372-amino-acid polypeptide reads, in one-letter code: uncharacterized protein (372 aa).

Residue Tyr-4 to Tyr-18 participates in FAD binding.

This sequence belongs to the DadA oxidoreductase family. FAD is required as a cofactor.

This is an uncharacterized protein from Bacillus subtilis (strain 168).